The primary structure comprises 20 residues: Tetracycline resistance leader peptide (20 aa).

The polypeptide is Tetracycline resistance leader peptide (tetL) (Bacillus cereus).